Reading from the N-terminus, the 607-residue chain is Elongation factor 4 (607 aa).

Residues 11 to 193 form the tr-type G domain; the sequence is SKIRNFSIIA…QIVEKVPAPT (183 aa). GTP-binding positions include 23 to 28 and 140 to 143; these read DHGKST and NKID.

This sequence belongs to the TRAFAC class translation factor GTPase superfamily. Classic translation factor GTPase family. LepA subfamily.

It localises to the cell membrane. It carries out the reaction GTP + H2O = GDP + phosphate + H(+). Functionally, required for accurate and efficient protein synthesis under certain stress conditions. May act as a fidelity factor of the translation reaction, by catalyzing a one-codon backward translocation of tRNAs on improperly translocated ribosomes. Back-translocation proceeds from a post-translocation (POST) complex to a pre-translocation (PRE) complex, thus giving elongation factor G a second chance to translocate the tRNAs correctly. Binds to ribosomes in a GTP-dependent manner. The chain is Elongation factor 4 from Bacillus cereus (strain ATCC 10987 / NRS 248).